The chain runs to 126 residues: Large ribosomal subunit protein uL22 (126 aa).

It belongs to the universal ribosomal protein uL22 family. Part of the 50S ribosomal subunit.

Functionally, this protein binds specifically to 23S rRNA; its binding is stimulated by other ribosomal proteins, e.g. L4, L17, and L20. It is important during the early stages of 50S assembly. It makes multiple contacts with different domains of the 23S rRNA in the assembled 50S subunit and ribosome. In terms of biological role, the globular domain of the protein is located near the polypeptide exit tunnel on the outside of the subunit, while an extended beta-hairpin is found that lines the wall of the exit tunnel in the center of the 70S ribosome. In Cereibacter sphaeroides (strain ATCC 17029 / ATH 2.4.9) (Rhodobacter sphaeroides), this protein is Large ribosomal subunit protein uL22.